Consider the following 454-residue polypeptide: Putative flavin-containing monoamine oxidase AofH (454 aa).

The protein belongs to the flavin monoamine oxidase family. FAD is required as a cofactor.

The protein is Putative flavin-containing monoamine oxidase AofH (aofH) of Mycobacterium tuberculosis (strain CDC 1551 / Oshkosh).